Consider the following 417-residue polypeptide: Histidine--tRNA ligase (417 aa).

The protein belongs to the class-II aminoacyl-tRNA synthetase family.

The protein localises to the cytoplasm. It carries out the reaction tRNA(His) + L-histidine + ATP = L-histidyl-tRNA(His) + AMP + diphosphate + H(+). The protein is Histidine--tRNA ligase of Pyrobaculum neutrophilum (strain DSM 2338 / JCM 9278 / NBRC 100436 / V24Sta) (Thermoproteus neutrophilus).